The following is a 253-amino-acid chain: PAXIP1-associated glutamate-rich protein 1A (253 aa).

2 disordered regions span residues Met1 to Pro108 and Leu126 to Tyr253. The segment covering Lys45–Glu66 has biased composition (basic and acidic residues). The sufficient for interaction with NCOA1 stretch occupies residues Tyr115–Glu159. Thr137 carries the post-translational modification Phosphothreonine. The span at Gln141–Glu158 shows a compositional bias: acidic residues. A phosphoserine mark is found at Ser142 and Ser147. The interval Lys160–Tyr253 is sufficient for interaction with ESR1. Residues Gln194 to Arg222 show a composition bias toward basic and acidic residues. The residue at position 236 (Ser236) is a Phosphoserine. The span at Pro238 to Phe247 shows a compositional bias: polar residues.

In terms of assembly, component of the KMT2 family MLL2/MLL3 complex, at least composed of the histone methyltransferases KMT2D and/or KMT2C, the common subunits ASH2L, RBBP5, WDR5 and DPY30, and the complex type-specific subunits PAXIP1/PTIP, PAGR1, NCOA6 and KDM6A; PAXIP1 is required for the association with the MLL2/MLL3 complex. Forms a constitutive complex with PAXIP1/PTIP independently of the MLL2/MLL3 complex. Interacts with NCOA1, ESR1, NR3C1, AR.

Its subcellular location is the nucleus. Its association with the histone methyltransferase MLL2/MLL3 complex is suggesting a role in epigenetic transcriptional activation. However, in association with PAXIP1/PTIP is proposed to function at least in part independently of the MLL2/MLL3 complex. Proposed to be recruited by PAXIP1 to sites of DNA damage where the PAGR1:PAXIP1 complex is required for cell survival in response to DNA damage independently of the MLL2/MLL3 complex. However, its function in DNA damage has been questioned. During immunoglobulin class switching in activated B-cells is involved in transcription regulation of downstream switch regions at the immunoglobulin heavy-chain (Igh) locus independently of the MLL2/MLL3 complex. Involved in both estrogen receptor-regulated gene transcription and estrogen-stimulated G1/S cell-cycle transition. Acts as a transcriptional cofactor for nuclear hormone receptors. Inhibits the induction properties of several steroid receptors such as NR3C1, AR and PPARG; the mechanism of inhibition appears to be gene-dependent. May be involved in the regulation of the BMP pathway in extraembryonic development. In Mus musculus (Mouse), this protein is PAXIP1-associated glutamate-rich protein 1A.